The sequence spans 923 residues: Probable dipeptidyl-aminopeptidase B (923 aa).

Over residues 1–16 (MATEKGHGRDDEERVP) the composition is skewed to basic and acidic residues. The segment at 1–21 (MATEKGHGRDDEERVPLTRGS) is disordered. The Cytoplasmic segment spans residues 1-99 (MATEKGHGRD…KPMHKSVKIA (99 aa)). The helical; Signal-anchor for type II membrane protein transmembrane segment at 100–120 (LWTLLFLSLGGWSLAFVLFIF) threads the bilayer. Residues 121–923 (RSHDTYETPI…GLSYNFKHLH (803 aa)) lie on the Vacuolar side of the membrane. Residues Asn135, Asn351, and Asn574 are each glycosylated (N-linked (GlcNAc...) asparagine). The active-site Charge relay system is the Ser756. Residue Asn815 is glycosylated (N-linked (GlcNAc...) asparagine). Catalysis depends on charge relay system residues Asp833 and His866. Asn902 carries an N-linked (GlcNAc...) asparagine glycan.

It belongs to the peptidase S9B family.

It is found in the vacuole membrane. It catalyses the reaction Release of an N-terminal dipeptide, Xaa-Yaa-|-Zaa-, from a polypeptide, preferentially when Yaa is Pro, provided Zaa is neither Pro nor hydroxyproline.. Its function is as follows. Type IV dipeptidyl-peptidase which removes N-terminal dipeptides sequentially from polypeptides having unsubstituted N-termini provided that the penultimate residue is proline. In Ajellomyces capsulatus (strain G186AR / H82 / ATCC MYA-2454 / RMSCC 2432) (Darling's disease fungus), this protein is Probable dipeptidyl-aminopeptidase B (DAPB).